Here is a 233-residue protein sequence, read N- to C-terminus: Purine nucleoside phosphorylase DeoD-type (233 aa).

Residue His4 participates in a purine D-ribonucleoside binding. Phosphate-binding positions include Gly20, Arg24, Arg43, and 87-90 (RVGS). A purine D-ribonucleoside is bound by residues 178–180 (EME) and 202–203 (SD). Asp203 serves as the catalytic Proton donor.

This sequence belongs to the PNP/UDP phosphorylase family. As to quaternary structure, homohexamer; trimer of homodimers.

The catalysed reaction is a purine D-ribonucleoside + phosphate = a purine nucleobase + alpha-D-ribose 1-phosphate. The enzyme catalyses a purine 2'-deoxy-D-ribonucleoside + phosphate = a purine nucleobase + 2-deoxy-alpha-D-ribose 1-phosphate. Functionally, catalyzes the reversible phosphorolytic breakdown of the N-glycosidic bond in the beta-(deoxy)ribonucleoside molecules, with the formation of the corresponding free purine bases and pentose-1-phosphate. This is Purine nucleoside phosphorylase DeoD-type from Bacillus subtilis (strain 168).